The following is an 84-amino-acid chain: UPF0297 protein NT01CX_2279 (84 aa).

It belongs to the UPF0297 family.

This chain is UPF0297 protein NT01CX_2279, found in Clostridium novyi (strain NT).